The following is a 640-amino-acid chain: MHISELTHPNELKGLSIRELEEVSRQIREKHLQTVATSGGHLGPGLGVVELTVALYSTLDLDKDRVIWDVGHQAYPHKMLTGRYHDFHTLRQKDGVAGYLKRSESRFDHFGAGHASTSISAGLGMALARDAKGEDFKVVSIIGDGALTGGMALEAINHAGHLPHTRLMVILNDNEMSISPNVGAISRYLNKVRLSSPMQFLTDNLEEQIKHLPFVGDSLTPEMERVKEGMKRLVVPKVGAVIEELGFKYFGPIDGHSLQELIDTFKQAEKVPGPVFVHVSTTKGKGYDLAEKDQVGYHAQSPFNLSTGKAYPSSKPKPPSYSKVFAHTLTTLAKENPNIVGITAAMATGTGLDKLQAKLPKQYVDVGIAEQHAVTLAAGMACEGIRPVVAIYSTFLQRGYDQIIHDVCIQKLPVFFCLDRAGIVGADGPTHQGMYDIAYLRCIPNLVLMAPKDEAELQQMLVTGVNYTGGAIAMRYPRGNGIGVPLMEEGWEPLEIGKAEILRSGDDVLLLGYGSMVYPALQTAELLHEHGIEATVVNARFVKPLDTELILPLAERIGKVVTMEEGCLMGGFGSAVAEALMDNNVLVPLKRLGVPDILVDHATPEQSTVDLGLTPAQMAQNIMASLFKTETESVVAPGVS.

Residues histidine 72 and glycine 113–alanine 115 contribute to the thiamine diphosphate site. Aspartate 144 provides a ligand contact to Mg(2+). Residues glycine 145–alanine 146, asparagine 174, tyrosine 287, and glutamate 370 each bind thiamine diphosphate. Residue asparagine 174 coordinates Mg(2+).

It belongs to the transketolase family. DXPS subfamily. As to quaternary structure, homodimer. Requires Mg(2+) as cofactor. It depends on thiamine diphosphate as a cofactor.

It carries out the reaction D-glyceraldehyde 3-phosphate + pyruvate + H(+) = 1-deoxy-D-xylulose 5-phosphate + CO2. It functions in the pathway metabolic intermediate biosynthesis; 1-deoxy-D-xylulose 5-phosphate biosynthesis; 1-deoxy-D-xylulose 5-phosphate from D-glyceraldehyde 3-phosphate and pyruvate: step 1/1. Functionally, catalyzes the acyloin condensation reaction between C atoms 2 and 3 of pyruvate and glyceraldehyde 3-phosphate to yield 1-deoxy-D-xylulose-5-phosphate (DXP). In Synechocystis sp. (strain ATCC 27184 / PCC 6803 / Kazusa), this protein is 1-deoxy-D-xylulose-5-phosphate synthase.